A 202-amino-acid polypeptide reads, in one-letter code: Small ribosomal subunit protein uS4 (202 aa).

An S4 RNA-binding domain is found at 91 to 168 (SRLSSILYNS…HKVPDYLEVD (78 aa)).

The protein belongs to the universal ribosomal protein uS4 family. As to quaternary structure, part of the 30S ribosomal subunit. Contacts protein S5. The interaction surface between S4 and S5 is involved in control of translational fidelity.

Functionally, one of the primary rRNA binding proteins, it binds directly to 16S rRNA where it nucleates assembly of the body of the 30S subunit. Its function is as follows. With S5 and S12 plays an important role in translational accuracy. This is Small ribosomal subunit protein uS4 from Ehrlichia canis (strain Jake).